The primary structure comprises 351 residues: UDP-N-acetylenolpyruvoylglucosamine reductase (351 aa).

In terms of domain architecture, FAD-binding PCMH-type spans 25 to 196; that stretch reads HIQAQARWLL…AAVEFRLPLL (172 aa). The active site involves Arg173. Ser246 functions as the Proton donor in the catalytic mechanism. Glu343 is an active-site residue.

The protein belongs to the MurB family. It depends on FAD as a cofactor.

The protein resides in the cytoplasm. It catalyses the reaction UDP-N-acetyl-alpha-D-muramate + NADP(+) = UDP-N-acetyl-3-O-(1-carboxyvinyl)-alpha-D-glucosamine + NADPH + H(+). The protein operates within cell wall biogenesis; peptidoglycan biosynthesis. In terms of biological role, cell wall formation. This chain is UDP-N-acetylenolpyruvoylglucosamine reductase, found in Xylella fastidiosa (strain 9a5c).